The following is a 513-amino-acid chain: Cytochrome P450 4p1 (513 aa).

Heme contacts are provided by glutamate 320 and cysteine 459.

Belongs to the cytochrome P450 family. Heme is required as a cofactor.

The protein localises to the endoplasmic reticulum membrane. It localises to the microsome membrane. May be involved in the metabolism of insect hormones and in the breakdown of synthetic insecticides. This is Cytochrome P450 4p1 (Cyp4p1) from Drosophila melanogaster (Fruit fly).